Here is a 387-residue protein sequence, read N- to C-terminus: Acetylserotonin O-methyltransferase (387 aa).

S-adenosyl-L-methionine is bound by residues Y153, W170, E216, 246-248, and R263; that span reads GDF. H266 (proton donor/acceptor) is an active-site residue. D267 and Q317 together coordinate substrate. The segment at 354 to 387 is disordered; sequence AARGGGAGARSDGGGGDATSQTGSGTGSEVGAQD. The span at 356 to 370 shows a compositional bias: gly residues; it reads RGGGAGARSDGGGGD.

It belongs to the class I-like SAM-binding methyltransferase superfamily. Cation-independent O-methyltransferase family. Homodimer. Expressed predominantly in the pineal gland (at protein level). Very low expression, if any, in the retina.

It catalyses the reaction N-acetylserotonin + S-adenosyl-L-methionine = melatonin + S-adenosyl-L-homocysteine + H(+). Its pathway is aromatic compound metabolism; melatonin biosynthesis; melatonin from serotonin: step 1/2. In terms of biological role, catalyzes the transfer of a methyl group onto N-acetylserotonin, producing melatonin (N-acetyl-5-methoxytryptamine). In Mus musculus (Mouse), this protein is Acetylserotonin O-methyltransferase (Asmt).